The sequence spans 251 residues: Flap endonuclease Xni (251 aa).

The disordered stretch occupies residues 51–72; sequence EDDRSDSWRHQSLPDYKAGRSP. Mg(2+) is bound at residue Asp-104. The 90-residue stretch at 160 to 249 folds into the 5'-3' exonuclease domain; sequence VLPHQLPDYW…LSGNLQQLRL (90 aa). Residues Leu-171, Ala-172, Pro-180, Val-182, and Ile-185 each coordinate K(+). The interval 184-189 is interaction with DNA; sequence GIGAKT.

This sequence belongs to the Xni family. It depends on Mg(2+) as a cofactor. K(+) is required as a cofactor.

Functionally, has flap endonuclease activity. During DNA replication, flap endonucleases cleave the 5'-overhanging flap structure that is generated by displacement synthesis when DNA polymerase encounters the 5'-end of a downstream Okazaki fragment. This Yersinia enterocolitica serotype O:8 / biotype 1B (strain NCTC 13174 / 8081) protein is Flap endonuclease Xni.